The chain runs to 488 residues: Glutamyl-tRNA(Gln) amidotransferase subunit A (488 aa).

Active-site charge relay system residues include Lys78 and Ser153. The active-site Acyl-ester intermediate is the Ser177.

The protein belongs to the amidase family. GatA subfamily. In terms of assembly, heterotrimer of A, B and C subunits.

The catalysed reaction is L-glutamyl-tRNA(Gln) + L-glutamine + ATP + H2O = L-glutaminyl-tRNA(Gln) + L-glutamate + ADP + phosphate + H(+). Functionally, allows the formation of correctly charged Gln-tRNA(Gln) through the transamidation of misacylated Glu-tRNA(Gln) in organisms which lack glutaminyl-tRNA synthetase. The reaction takes place in the presence of glutamine and ATP through an activated gamma-phospho-Glu-tRNA(Gln). The polypeptide is Glutamyl-tRNA(Gln) amidotransferase subunit A (Thermoanaerobacter pseudethanolicus (strain ATCC 33223 / 39E) (Clostridium thermohydrosulfuricum)).